A 296-amino-acid polypeptide reads, in one-letter code: Diaminopimelate epimerase (296 aa).

Substrate is bound by residues N17, Q49, and N69. The active-site Proton donor is C78. Substrate is bound by residues 79–80 (GN), N171, N205, and 223–224 (ER). The Proton acceptor role is filled by C232. 233 to 234 (GT) is a binding site for substrate.

It belongs to the diaminopimelate epimerase family. As to quaternary structure, homodimer.

The protein localises to the cytoplasm. The catalysed reaction is (2S,6S)-2,6-diaminopimelate = meso-2,6-diaminopimelate. Its pathway is amino-acid biosynthesis; L-lysine biosynthesis via DAP pathway; DL-2,6-diaminopimelate from LL-2,6-diaminopimelate: step 1/1. Functionally, catalyzes the stereoinversion of LL-2,6-diaminopimelate (L,L-DAP) to meso-diaminopimelate (meso-DAP), a precursor of L-lysine and an essential component of the bacterial peptidoglycan. The chain is Diaminopimelate epimerase from Methylorubrum populi (strain ATCC BAA-705 / NCIMB 13946 / BJ001) (Methylobacterium populi).